A 142-amino-acid chain; its full sequence is Hemoglobin subunit alpha-A (142 aa).

Residues 2 to 142 (VLSAADKTNV…VATVLTAKYR (141 aa)) enclose the Globin domain. O2 is bound at residue His-59. His-88 contacts heme b.

Belongs to the globin family. As to quaternary structure, heterotetramer of two alpha chains and two beta chains. Red blood cells.

Its function is as follows. Involved in oxygen transport from the lung to the various peripheral tissues. In Apus apus (Common swift), this protein is Hemoglobin subunit alpha-A (HBAA).